We begin with the raw amino-acid sequence, 536 residues long: Proto-oncogene tyrosine-protein kinase Yrk (536 aa).

Gly-2 carries the N-myristoyl glycine lipid modification. 2 S-palmitoyl cysteine lipidation sites follow: Cys-3 and Cys-6. The interval 10 to 36 is disordered; sequence ISGKGQGGSGTGTPAHPPSQYDPDPTQ. The region spanning 81-142 is the SH3 domain; the sequence is GGVTLFIALY…PSNYVAPVDS (62 aa). An SH2 domain is found at 148–245; sequence WYFGKIGRKD…GLCCRLAVPC (98 aa). One can recognise a Protein kinase domain in the interval 270-523; the sequence is LQLLQKLGNG…YLQSFLEDYF (254 aa). Residues 276-284 and Lys-298 each bind ATP; that span reads LGNGQFGEV. Asp-389 (proton acceptor) is an active-site residue. Tyr-419 is modified (phosphotyrosine; by autocatalysis). Tyr-530 carries the post-translational modification Phosphotyrosine.

The protein belongs to the protein kinase superfamily. Tyr protein kinase family. SRC subfamily. Phosphorylated. In terms of tissue distribution, there are elevated levels of this protein in neural and hematopoietic tissues.

The enzyme catalyses L-tyrosyl-[protein] + ATP = O-phospho-L-tyrosyl-[protein] + ADP + H(+). Functionally, may participate in signaling pathways. The protein is Proto-oncogene tyrosine-protein kinase Yrk (YRK) of Gallus gallus (Chicken).